The primary structure comprises 500 residues: Probable glycine dehydrogenase (decarboxylating) subunit 2 (500 aa).

K273 carries the N6-(pyridoxal phosphate)lysine modification.

This sequence belongs to the GcvP family. C-terminal subunit subfamily. In terms of assembly, the glycine cleavage system is composed of four proteins: P, T, L and H. In this organism, the P 'protein' is a heterodimer of two subunits. It depends on pyridoxal 5'-phosphate as a cofactor.

It catalyses the reaction N(6)-[(R)-lipoyl]-L-lysyl-[glycine-cleavage complex H protein] + glycine + H(+) = N(6)-[(R)-S(8)-aminomethyldihydrolipoyl]-L-lysyl-[glycine-cleavage complex H protein] + CO2. The glycine cleavage system catalyzes the degradation of glycine. The P protein binds the alpha-amino group of glycine through its pyridoxal phosphate cofactor; CO(2) is released and the remaining methylamine moiety is then transferred to the lipoamide cofactor of the H protein. The chain is Probable glycine dehydrogenase (decarboxylating) subunit 2 from Rhodopirellula baltica (strain DSM 10527 / NCIMB 13988 / SH1).